The sequence spans 490 residues: Pup--protein ligase (490 aa).

Glutamate 9 is a Mg(2+) binding site. Arginine 53 contributes to the ATP binding site. Tyrosine 55 is a Mg(2+) binding site. The Proton acceptor role is filled by aspartate 57. Glutamate 63 is a Mg(2+) binding site. Serine 66 serves as a coordination point for ATP. The disordered stretch occupies residues 160–181 (KTHPNGGPVPGSTDPASSTGVP). An ATP-binding site is contributed by tryptophan 441.

Belongs to the Pup ligase/Pup deamidase family. Pup-conjugating enzyme subfamily.

It catalyses the reaction ATP + [prokaryotic ubiquitin-like protein]-L-glutamate + [protein]-L-lysine = ADP + phosphate + N(6)-([prokaryotic ubiquitin-like protein]-gamma-L-glutamyl)-[protein]-L-lysine.. The protein operates within protein degradation; proteasomal Pup-dependent pathway. It participates in protein modification; protein pupylation. Functionally, catalyzes the covalent attachment of the prokaryotic ubiquitin-like protein modifier Pup to the proteasomal substrate proteins, thereby targeting them for proteasomal degradation. This tagging system is termed pupylation. The ligation reaction involves the side-chain carboxylate of the C-terminal glutamate of Pup and the side-chain amino group of a substrate lysine. The sequence is that of Pup--protein ligase from Rothia mucilaginosa (strain DY-18) (Stomatococcus mucilaginosus).